We begin with the raw amino-acid sequence, 590 residues long: MSQDSKPSKANAGAVVEPSNFLRQIIDHDLASGAFSQRTNLAGEAIPSIITRFPPEPNGYLHIGHAKSICLNFGLASDYNNQPGGARCNMRLDDTNPVKEDVEYADSILDAVKWLGFDWGTHLYHASDYFDRLYEFAEILIQSGKAYVDSQSADDIHTNRGNFGQAGKNSPFRDRTPEENLQLFRDMRDGKFKDGEHVLRLKIDMAHPNIVMRDPVVYRIRHTDHHRTGSKWCIYPLYDFTHCISDALENISHSICTLEFENNRPLYDWIVNSLKELGVFKDPVPHQHEFARLNLTYTITSKRKLLQLVEEKHVEGWDDPRMPTIVGIRRRGYTPESIRLFCERIGVSKADSWIDMSTLDQALRDDLEVRAPRATAVLKPLKLVVENFDAPTKEACSAPRHPNYPEWGNREFNFTRELWIEADDFMQEPIKGFFRLYPPIDDQPGSRVRLRHGFVVECTGFETDAQGNVTQVNVTHFPDSKSGTPGSNNYKVKGNIHWISAAEAIPAEVRLYDHLFTDPYPDSGDKNFLDAINPNSKQTISAYLEPCMKDAKAEDRFQFERHGYFVADQSDSKPGKPIFNRAVGLKDSWK.

Positions 55–65 match the 'HIGH' region motif; it reads PEPNGYLHIGH. ATP is bound by residues 56–58 and 62–68; these read EPN and HIGHAKS. Positions 93 and 238 each coordinate L-glutamine. ATP contacts are provided by residues Thr-257 and 292-293; that span reads RL. The 'KMSKS' region signature appears at 299 to 303; it reads ITSKR.

It belongs to the class-I aminoacyl-tRNA synthetase family. Monomer.

It localises to the cytoplasm. The catalysed reaction is tRNA(Gln) + L-glutamine + ATP = L-glutaminyl-tRNA(Gln) + AMP + diphosphate. The protein is Glutamine--tRNA ligase of Polynucleobacter necessarius subsp. necessarius (strain STIR1).